The following is a 228-amino-acid chain: Small ribosomal subunit protein uS7m (228 aa).

A mitochondrion-targeting transit peptide spans 1–33 (MAASVRHLLKPWTPSLCLMRWSRYNPYYLDPEP).

It belongs to the universal ribosomal protein uS7 family. Component of the mitochondrial ribosome small subunit (28S) which comprises a 12S rRNA and about 30 distinct proteins.

The protein localises to the mitochondrion. The chain is Small ribosomal subunit protein uS7m (mrps7) from Danio rerio (Zebrafish).